Consider the following 263-residue polypeptide: N-acyl homoserine lactonase AttM (263 aa).

The Zn(2+) site is built by His103, His105, Asp107, His108, His180, Asp202, and His247.

It belongs to the metallo-beta-lactamase superfamily. Requires Zn(2+) as cofactor.

It catalyses the reaction an N-acyl-L-homoserine lactone + H2O = an N-acyl-L-homoserine + H(+). This chain is N-acyl homoserine lactonase AttM, found in Agrobacterium fabrum (strain C58 / ATCC 33970) (Agrobacterium tumefaciens (strain C58)).